We begin with the raw amino-acid sequence, 435 residues long: ATP-dependent protease ATPase subunit HslU (435 aa).

Residues Ile-18, 60–65 (GVGKTE), Asp-248, Glu-313, and Arg-385 contribute to the ATP site.

This sequence belongs to the ClpX chaperone family. HslU subfamily. In terms of assembly, a double ring-shaped homohexamer of HslV is capped on each side by a ring-shaped HslU homohexamer. The assembly of the HslU/HslV complex is dependent on binding of ATP.

It is found in the cytoplasm. In terms of biological role, ATPase subunit of a proteasome-like degradation complex; this subunit has chaperone activity. The binding of ATP and its subsequent hydrolysis by HslU are essential for unfolding of protein substrates subsequently hydrolyzed by HslV. HslU recognizes the N-terminal part of its protein substrates and unfolds these before they are guided to HslV for hydrolysis. The chain is ATP-dependent protease ATPase subunit HslU from Rhizobium leguminosarum bv. trifolii (strain WSM2304).